A 496-amino-acid chain; its full sequence is D-2-hydroxyglutarate--pyruvate transhydrogenase DLD3 (496 aa).

A Glycyl lysine isopeptide (Lys-Gly) (interchain with G-Cter in ubiquitin) cross-link involves residue lysine 17. The FAD-binding PCMH-type domain occupies 64-243 (YRGQSNLILL…TGVSIVAAAK (180 aa)).

Belongs to the FAD-binding oxidoreductase/transferase type 4 family. It depends on FAD as a cofactor.

The protein localises to the cytoplasm. The enzyme catalyses (R)-lactate + 2 Fe(III)-[cytochrome c] = 2 Fe(II)-[cytochrome c] + pyruvate + 2 H(+). It carries out the reaction (R)-2-hydroxyglutarate + pyruvate = (R)-lactate + 2-oxoglutarate. Catalyzes the reversible oxidation of (R)-2-hydroxyglutarate to 2-oxoglutarate coupled to reduction of pyruvate to (R)-lactate. Can also use oxaloacetate as electron acceptor instead of pyruvate producing (R)-malate. In Saccharomyces cerevisiae (strain ATCC 204508 / S288c) (Baker's yeast), this protein is D-2-hydroxyglutarate--pyruvate transhydrogenase DLD3 (DLD3).